We begin with the raw amino-acid sequence, 157 residues long: SsrA-binding protein (157 aa).

Belongs to the SmpB family.

Its subcellular location is the cytoplasm. Functionally, required for rescue of stalled ribosomes mediated by trans-translation. Binds to transfer-messenger RNA (tmRNA), required for stable association of tmRNA with ribosomes. tmRNA and SmpB together mimic tRNA shape, replacing the anticodon stem-loop with SmpB. tmRNA is encoded by the ssrA gene; the 2 termini fold to resemble tRNA(Ala) and it encodes a 'tag peptide', a short internal open reading frame. During trans-translation Ala-aminoacylated tmRNA acts like a tRNA, entering the A-site of stalled ribosomes, displacing the stalled mRNA. The ribosome then switches to translate the ORF on the tmRNA; the nascent peptide is terminated with the 'tag peptide' encoded by the tmRNA and targeted for degradation. The ribosome is freed to recommence translation, which seems to be the essential function of trans-translation. The chain is SsrA-binding protein from Syntrophomonas wolfei subsp. wolfei (strain DSM 2245B / Goettingen).